A 329-amino-acid polypeptide reads, in one-letter code: Calponin-3 (329 aa).

N6-acetyllysine is present on lysine 23. The region spanning 26-130 (HQAEEDLRNW…TLVALAGLAK (105 aa)) is the Calponin-homology (CH) domain. Lysine 158 is subject to N6-methyllysine. 3 Calponin-like repeats span residues 164 to 189 (IGLQMGTNKCASQAGMTAYGTRRHLY), 204 to 229 (ISLQMGTNKGASQAGMLAPGTRRDIY), and 243 to 268 (ISLQMGTNKVASQKGMSVYGLGRQVY). Residues 280–329 (VIHNGSQGTGTNGSEISDSDYQAEYPDEYHGEYQDDYPRDYQYGDQGIDY) are disordered. Over residues 306-318 (DEYHGEYQDDYPR) the composition is skewed to basic and acidic residues.

The protein belongs to the calponin family.

In terms of biological role, thin filament-associated protein that is implicated in the regulation and modulation of smooth muscle contraction. It is capable of binding to actin, calmodulin and tropomyosin. The interaction of calponin with actin inhibits the actomyosin Mg-ATPase activity. The protein is Calponin-3 (CNN3) of Bos taurus (Bovine).